A 132-amino-acid chain; its full sequence is MDVTRLLLATLLVFLCFFTAYSHPPPEEKLRDDRSLRSNSSVNLLDFPSVSIMALNKNSKQISRKEAEKKRSSKKEASMKKVARPRTPLSAPCVATRDSCKPPAPACCDPCASCQCRFFRSACSCRVLSLNC.

Positions 1–22 (MDVTRLLLATLLVFLCFFTAYS) are cleaved as a signal peptide. An N-linked (GlcNAc...) asparagine glycan is attached at Asn39. The tract at residues 60–88 (KQISRKEAEKKRSSKKEASMKKVARPRTP) is disordered. Over residues 63-79 (SRKEAEKKRSSKKEASM) the composition is skewed to basic and acidic residues. 5 disulfides stabilise this stretch: Cys93-Cys108, Cys100-Cys114, Cys107-Cys125, Cys111-Cys132, and Cys116-Cys123. Residues 93–132 (CVATRDSCKPPAPACCDPCASCQCRFFRSACSCRVLSLNC) enclose the Agouti domain.

It is found in the secreted. In terms of biological role, involved in the regulation of melanogenesis. The binding of ASP to MC1R precludes alpha-MSH initiated signaling and thus blocks production of cAMP, leading to a down-regulation of eumelanogenesis (brown/black pigment) and thus increasing synthesis of pheomelanin (yellow/red pigment). The sequence is that of Agouti-signaling protein (ASIP) from Macaca cyclopis (Taiwan macaque).